Here is a 278-residue protein sequence, read N- to C-terminus: 4-hydroxy-tetrahydrodipicolinate reductase (278 aa).

Residues 13 to 18 and 111 to 113 contribute to the NAD(+) site; these read GAAGKM and GTT. Catalysis depends on histidine 167, which acts as the Proton donor/acceptor. Histidine 168 contacts (S)-2,3,4,5-tetrahydrodipicolinate. The active-site Proton donor is the lysine 171. A (S)-2,3,4,5-tetrahydrodipicolinate-binding site is contributed by 177–178; sequence GT.

It belongs to the DapB family.

It is found in the cytoplasm. It catalyses the reaction (S)-2,3,4,5-tetrahydrodipicolinate + NAD(+) + H2O = (2S,4S)-4-hydroxy-2,3,4,5-tetrahydrodipicolinate + NADH + H(+). The enzyme catalyses (S)-2,3,4,5-tetrahydrodipicolinate + NADP(+) + H2O = (2S,4S)-4-hydroxy-2,3,4,5-tetrahydrodipicolinate + NADPH + H(+). Its pathway is amino-acid biosynthesis; L-lysine biosynthesis via DAP pathway; (S)-tetrahydrodipicolinate from L-aspartate: step 4/4. In terms of biological role, catalyzes the conversion of 4-hydroxy-tetrahydrodipicolinate (HTPA) to tetrahydrodipicolinate. The polypeptide is 4-hydroxy-tetrahydrodipicolinate reductase (Mastigocladus laminosus (Fischerella sp.)).